The sequence spans 96 residues: DNA-directed RNA polymerase subunit Rpo11 (96 aa).

This sequence belongs to the archaeal Rpo11/eukaryotic RPB11/RPC19 RNA polymerase subunit family. Part of the RNA polymerase complex.

It localises to the cytoplasm. The enzyme catalyses RNA(n) + a ribonucleoside 5'-triphosphate = RNA(n+1) + diphosphate. DNA-dependent RNA polymerase (RNAP) catalyzes the transcription of DNA into RNA using the four ribonucleoside triphosphates as substrates. The protein is DNA-directed RNA polymerase subunit Rpo11 of Haloquadratum walsbyi (strain DSM 16790 / HBSQ001).